A 998-amino-acid chain; its full sequence is MPESIIAGIPVHFPFEPYEVQRAFMEKVIICLRDGTNGVLESPTGTGKTLSLLCSSLAWIRTRQSEQQKQIRKLQDAANNTKVGPTGIVPGEAAELALTVGKANNWGVPKVIYASRTHSQLTQAMRELKRSAYAGMRSVVLGSRDQLCIHPEVMREQGNSNKVNMCKMRVHSKTCSFQLRVESKKDHPDFRGPSIMDIEDLVKVGQKLKMCPYFASKELVNDADITFMPYNYLLDPMARKANKIELSNTIVILDEAHNIEKICEESASVQIKSSDVAVAIEDVTHIMRIFTSADSQDFSGDEPKDFTLDDLTLLKEMLLELEKAIDGVVVDNLAEGTTYPASYMYELLAKANFTYGNCASIVALLDKLVQYLMVASQNNSSMIMRKGGSFLVLAELLTIVFANKEDIMAKVHRSFKVHVEVEEAKQNAGKPAPKQQQQGGWLGKGNNTSNSSSSNKAKVINFWCFNPGFGMEQLLNTQVRSVILTSGTLAPLKPLIAELAIPVAQHLENPHIVDQSQVYVKIIGTGPDRQQLISNFKNRDNPKYISSLGQTILNVSRIVPDGLLVFFPSYPMLNKCVDAWQTSGLWADIAAKKPIFLEPRGKDQFTTTMEEFYQAIRDSKGACFMAVCRGKVSEGLDFADRNGRAVIITGLPYPPLKDPKVILKRRYLEANRTKENQLLTGQEWYNLDATRAVNQAIGRVIRHRHDYGAILLCDSRFQDNSQVQQLSKWIRGHLGARPQCSPFGPIVRELRQFFRHAEETMEQPKERTDEPLLKNVYKTEAVTQENNEEKPLFKVKREPGQMATNAAAFKQANEMAIKVEMTNSIKSWTPDDYVSAAGRTQSHSQSKPPNAMDFMSRLDSNVSSIDFNSTGTGNLVKIHKRERSSPTFGDTKSSSQLKKRYKLVDNIKTEPSTSSSCKAPESRADFLREVRCFINQDEFRDFGKALLAYKNGGDEAFESLMSLLFKLLGKPQMRYLLLGIRRYLKNEHKAEFDKRVAT.

Positions 7-324 (AGIPVHFPFE…KEMLLELEKA (318 aa)) constitute a Helicase ATP-binding domain. ATP is bound at residue 42–49 (SPTGTGKT). 4 residues coordinate [4Fe-4S] cluster: Cys-148, Cys-166, Cys-175, and Cys-211. The DEAH box motif lies at 254 to 257 (DEAH). The tract at residues 426-454 (QNAGKPAPKQQQQGGWLGKGNNTSNSSSS) is disordered. Thr-887 carries the post-translational modification Phosphothreonine.

It belongs to the helicase family. RAD3/XPD subfamily.

The protein localises to the nucleus. The catalysed reaction is ATP + H2O = ADP + phosphate + H(+). Its function is as follows. A probable ATP-dependent DNA helicase implicated in DNA repair and the maintenance of genomic stability. Acts as an anti-recombinase to counteract toxic recombination and limit crossover during meiosis. Regulates meiotic recombination and crossover homeostasis by physically dissociating strand invasion events and thereby promotes noncrossover repair by meiotic synthesis dependent strand annealing (SDSA) as well as disassembly of D loop recombination intermediates. The sequence is that of Regulator of telomere elongation helicase 1 homolog from Drosophila willistoni (Fruit fly).